A 344-amino-acid polypeptide reads, in one-letter code: MLILGVESSCDETGIALYDSEAGLLSHALYSQVAMHAEYGGVVPELASRDHIRRVVPLLREALGQAGKMLDEVDAVAYTRGPGLAGALLVGCAFAEALALAIDKPTIPVHHLEGHLLSPLLSSDPPTFPFVALLVSGGHTQLMKVTGVGEYELLGETLDDAAGEAFDKSAKLLGLPYPGGALLSKLAEQGTPGVHELPRPMLHSGDLSFSFSGLKTAVLTLVREHADAMSDEFKANAARAFQEAIVEVLVKKSLKAMKQTGLKQLVVAGGVGANKQLRTTLNDEAKRKRFRVYYPELEFCTDNGAMIALAGCLRLQSGSPSKAAGSFAVQPRWPLMEMSVSPTK.

Residues His-111 and His-115 each contribute to the Fe cation site. Substrate contacts are provided by residues 134 to 138, Asp-167, Gly-180, and Asn-274; that span reads LVSGG. Position 302 (Asp-302) interacts with Fe cation.

This sequence belongs to the KAE1 / TsaD family. It depends on Fe(2+) as a cofactor.

The protein resides in the cytoplasm. It carries out the reaction L-threonylcarbamoyladenylate + adenosine(37) in tRNA = N(6)-L-threonylcarbamoyladenosine(37) in tRNA + AMP + H(+). Functionally, required for the formation of a threonylcarbamoyl group on adenosine at position 37 (t(6)A37) in tRNAs that read codons beginning with adenine. Is involved in the transfer of the threonylcarbamoyl moiety of threonylcarbamoyl-AMP (TC-AMP) to the N6 group of A37, together with TsaE and TsaB. TsaD likely plays a direct catalytic role in this reaction. The chain is tRNA N6-adenosine threonylcarbamoyltransferase from Dechloromonas aromatica (strain RCB).